Here is a 127-residue protein sequence, read N- to C-terminus: Protein B20 (127 aa).

The interval 86 to 127 (DRTGMNSESDSESDNISIKTEYENEYEFYDETQDQSTQHNDL) is disordered. Acidic residues predominate over residues 108–118 (ENEYEFYDETQ).

This chain is Protein B20, found in Homo sapiens (Human).